The sequence spans 894 residues: MAKNRFLLIIAAVFVVLPAALSLITFYTDWLFFRETGYTQVFTTALAAKVGAGLASGLFMFAFAMVNLYFANRASLPHTPRGVFFEGGNVYRLQRDEMVQMVKPLSILAALVLSLLAGRWGALQWQNLLLFTNGVTVGTSDPIMGKDLGFYLFSLPLLEHVKGFVAFTVLVTGIMVGAVYFFRGGIILSDRGADVDGAVRRHLAILLGIFSLTLATGFYLDAVRLLLAGGNSFHGAGYVDVNARLPLYRILTLATPLAGAVVAFGLWKGAWRLTLIPPIIVAAVYGIGIVGYPAMLQKFKVAPNELALETPYIANSIRFTRLGYDLDKIKTVPFDVELNLSAADIAKNDATIRNIRLWDHGPLLKTYSQLQQIRTYYKFFDVDNDRYLVNGQYTQVMLSPRELSYNDLPSRNWINERLIFTHGNGLAVGPVSRISREGLPEFFIKDIPAVSLADIRVTRPEIYYGELSNDYVIVGTKVPEFSYPTATGNINTTYGGKGGVALDSMLRKALFAARFKTEKILLSSDITDQSRILYYRTVGERVKTVAPFIRFDGDPYLVVADNGTLKWIIDGYTHSSRLPYSKPLRGGINYMRNSVKAVVDAYDGTLDFYISDPDDVMIKVYARIFPGLFKPLSAMSADLRGHIRYPHQFLQVQAAMFATYHMTDPKVFYNRENLWEIPVLGEAPMEPYYTVMKLPGEAREEYILLLPFTPSKRDNLAAWLTARCDGENYGKLLAYTFPRDRLIYGPKQIDARINQDSHISQQLTLWSQRGSQVIRGSMLVIPIEQSLLYVQPLFLAAADKAGLPELRRVIVAYGDEVVMEESLELALQRIFGGKRAPVAGVAAAPEDGKASTGDLAREAMSIFERATNLQRQGDWAGYGEELRKLQQVLKQLAR.

Helical transmembrane passes span 6 to 26 (FLLI…LITF), 50 to 70 (VGAG…NLYF), 98 to 118 (MVQM…LLAG), 162 to 182 (KGFV…VYFF), 203 to 223 (LAIL…LDAV), 250 to 270 (ILTL…WKGA), and 275 to 295 (LIPP…YPAM).

This sequence belongs to the UPF0182 family.

Its subcellular location is the cell membrane. This Geobacter sulfurreducens (strain ATCC 51573 / DSM 12127 / PCA) protein is UPF0182 protein GSU2333.